We begin with the raw amino-acid sequence, 414 residues long: Serine hydroxymethyltransferase (414 aa).

Residues leucine 121 and 125–127 (GHL) contribute to the (6S)-5,6,7,8-tetrahydrofolate site. Lysine 230 bears the N6-(pyridoxal phosphate)lysine mark.

Belongs to the SHMT family. Homodimer. Pyridoxal 5'-phosphate is required as a cofactor.

It is found in the cytoplasm. The catalysed reaction is (6R)-5,10-methylene-5,6,7,8-tetrahydrofolate + glycine + H2O = (6S)-5,6,7,8-tetrahydrofolate + L-serine. The protein operates within one-carbon metabolism; tetrahydrofolate interconversion. It participates in amino-acid biosynthesis; glycine biosynthesis; glycine from L-serine: step 1/1. Its function is as follows. Catalyzes the reversible interconversion of serine and glycine with tetrahydrofolate (THF) serving as the one-carbon carrier. This reaction serves as the major source of one-carbon groups required for the biosynthesis of purines, thymidylate, methionine, and other important biomolecules. Also exhibits THF-independent aldolase activity toward beta-hydroxyamino acids, producing glycine and aldehydes, via a retro-aldol mechanism. The protein is Serine hydroxymethyltransferase of Acidithiobacillus ferrooxidans (strain ATCC 23270 / DSM 14882 / CIP 104768 / NCIMB 8455) (Ferrobacillus ferrooxidans (strain ATCC 23270)).